We begin with the raw amino-acid sequence, 616 residues long: Protein decapentaplegic (616 aa).

Residues 1 to 23 (MRAWILLLAVLATSQPIVQVAST) form the signal peptide. A propeptide spanning residues 24–474 (EDTSISQRFI…DGRHKARSIR (451 aa)) is cleaved from the precursor. The disordered stretch occupies residues 80-188 (SDSDSDNNNN…TSTESHQSPI (109 aa)). The segment covering 86 to 105 (NNNNNYKNRNNNNNNLNKGP) has biased composition (low complexity). A compositionally biased stretch (basic residues) spans 106 to 115 (RNNKNKGNKH). Basic and acidic residues predominate over residues 116-139 (SKSDANRQFNEVHKPRTDQLENSK). Asn-147 is a glycosylation site (N-linked (GlcNAc...) asparagine). Over residues 173 to 188 (ATTTALTSTESHQSPI) the composition is skewed to polar residues. N-linked (GlcNAc...) asparagine glycans are attached at residues Asn-360 and Asn-395. The tract at residues 470–512 (ARSIRDVSGGGGGGGGAGEGGKGNGGGRNRRHQRRPARRKNHE) is disordered. Positions 477 to 496 (SGGGGGGGGAGEGGKGNGGG) are enriched in gly residues. Residues 497-509 (RNRRHQRRPARRK) are compositionally biased toward basic residues. 3 disulfides stabilise this stretch: Cys-515–Cys-581, Cys-544–Cys-613, and Cys-548–Cys-615. Asn-557 is a glycosylation site (N-linked (GlcNAc...) asparagine).

Belongs to the TGF-beta family. As to quaternary structure, heterodimers of scw/dpp are the active subunit, dpp/dpp homodimers elicit a basal response and scw/scw homodimers alone are ineffective in specifying a dorsal pattern. In terms of tissue distribution, expressed in the imaginal discs associated with establishment of the proximal-distal axis of the appendages, and midgut mesoderm.

It is found in the secreted. Its function is as follows. Acts as an extracellular morphogen to establish at least two cellular response thresholds within the dorsal half of the drosophila embryo. Required for the proper development of the embryonic dorsal hypoderm, for viability of larvae and for cell viability of the epithelial cells in the imaginal disks. Acts together with scw. This Drosophila pseudoobscura pseudoobscura (Fruit fly) protein is Protein decapentaplegic (dpp).